Reading from the N-terminus, the 205-residue chain is Molybdenum cofactor guanylyltransferase (205 aa).

GTP-binding positions include 14–16, K27, D77, and D107; that span reads LAG. A Mg(2+)-binding site is contributed by D107.

Belongs to the MobA family. As to quaternary structure, monomer. The cofactor is Mg(2+).

It is found in the cytoplasm. It catalyses the reaction Mo-molybdopterin + GTP + H(+) = Mo-molybdopterin guanine dinucleotide + diphosphate. Functionally, transfers a GMP moiety from GTP to Mo-molybdopterin (Mo-MPT) cofactor (Moco or molybdenum cofactor) to form Mo-molybdopterin guanine dinucleotide (Mo-MGD) cofactor. This is Molybdenum cofactor guanylyltransferase from Burkholderia orbicola (strain MC0-3).